Consider the following 509-residue polypeptide: tRNA-2-methylthio-N(6)-dimethylallyladenosine synthase (509 aa).

Over residues 1–15 the composition is skewed to polar residues; the sequence is MNEQQRLASQQVNSS. A disordered region spans residues 1–23; the sequence is MNEQQRLASQQVNSSTKKEEKDY. Residues 66–184 enclose the MTTase N-terminal domain; the sequence is RKFYIRTYGC…LPYILKDAMF (119 aa). [4Fe-4S] cluster contacts are provided by cysteine 75, cysteine 111, cysteine 145, cysteine 221, cysteine 225, and cysteine 228. Residues 207–437 form the Radical SAM core domain; sequence RRGDIKAWVN…NALVNKLAIE (231 aa). The region spanning 440 to 503 is the TRAM domain; the sequence is DRYKGQIVEV…TWSLNGELVE (64 aa).

It belongs to the methylthiotransferase family. MiaB subfamily. Monomer. [4Fe-4S] cluster serves as cofactor.

Its subcellular location is the cytoplasm. The catalysed reaction is N(6)-dimethylallyladenosine(37) in tRNA + (sulfur carrier)-SH + AH2 + 2 S-adenosyl-L-methionine = 2-methylsulfanyl-N(6)-dimethylallyladenosine(37) in tRNA + (sulfur carrier)-H + 5'-deoxyadenosine + L-methionine + A + S-adenosyl-L-homocysteine + 2 H(+). Catalyzes the methylthiolation of N6-(dimethylallyl)adenosine (i(6)A), leading to the formation of 2-methylthio-N6-(dimethylallyl)adenosine (ms(2)i(6)A) at position 37 in tRNAs that read codons beginning with uridine. In Bacillus anthracis, this protein is tRNA-2-methylthio-N(6)-dimethylallyladenosine synthase.